A 275-amino-acid chain; its full sequence is NH(3)-dependent NAD(+) synthetase (275 aa).

46–53 is a binding site for ATP; sequence GISGGQDS. Mg(2+) is bound at residue aspartate 52. Arginine 140 contacts deamido-NAD(+). Threonine 160 contacts ATP. Glutamate 165 is a Mg(2+) binding site. Deamido-NAD(+)-binding residues include lysine 173 and aspartate 180. Residues lysine 189 and threonine 211 each coordinate ATP. Position 260-261 (260-261) interacts with deamido-NAD(+); sequence HK.

It belongs to the NAD synthetase family. In terms of assembly, homodimer.

The catalysed reaction is deamido-NAD(+) + NH4(+) + ATP = AMP + diphosphate + NAD(+) + H(+). It participates in cofactor biosynthesis; NAD(+) biosynthesis; NAD(+) from deamido-NAD(+) (ammonia route): step 1/1. Functionally, catalyzes the ATP-dependent amidation of deamido-NAD to form NAD. Uses ammonia as a nitrogen source. The chain is NH(3)-dependent NAD(+) synthetase from Shigella flexneri serotype 5b (strain 8401).